The sequence spans 502 residues: TGF-beta-activated kinase 1 and MAP3K7-binding protein 1 (502 aa).

Positions 1–21 (MAAQRRSLLQSEQQPSWTDDL) are disordered. A Phosphoserine modification is found at Ser-7. A compositionally biased stretch (polar residues) spans 7–17 (SLLQSEQQPSW). The region spanning 28–365 (GVGSASNRSY…EDMTLLVRNF (338 aa)) is the PPM-type phosphatase domain. A glycan (O-linked (GlcNAc) serine) is linked at Ser-393. The span at 414-437 (QMVNGSHSASTLDEATPTLTNQSP) shows a compositional bias: polar residues. Residues 414–476 (QMVNGSHSAS…SLPPGEDGRV (63 aa)) are disordered. Ser-421 is modified (phosphoserine). At Thr-429 the chain carries Phosphothreonine. Residue Ser-436 is modified to Phosphoserine. Residues 438–455 (TLTLQSTNTHTQSSSSSS) are compositionally biased toward low complexity. Thr-440 carries the post-translational modification Phosphothreonine.

Interacts with XIAP and BIRC7. Interacts with TRAF6 and MAP3K7; during IL-1 signaling. Identified in the TRIKA2 complex composed of MAP3K7, TAB1 and TAB2. Interacts with TRAF6 and MAPK14; these interactions allow MAPK14 autophosphorylation. Interacts with STING1; interaction takes place following cGAMP activation and promotes TAB1 recruitment to the endoplasmic reticulum, triggering MAP3K7/TAK1 activation and STING1 phosphorylation. Phosphorylated at all three sites Ser-421, Thr-429 and Ser-436 by MAPK14 when cells were exposed to cellular stresses, or stimulated with TNF-alpha, IL1 or LPS. These phosphorylations inhibit TAK1 activation by a feedback control mechanism. Dephosphorylated by DUSP14 at Ser-436, leading to TAB1-MAP3K7/TAK1 complex inactivation in T-cells. Post-translationally, ubiquitinated by MAP3K1 with 'Lys-63'-linked polyubiquitin; leading to activation of TAK1 and of JNK and p38 MAP kinases following EGF and TGF-beta stimulation. Ubiquitinated by ITCH with 'Lys-48'-linked polyubiquitin; leading to proteasomal degradation. Ubiquitinated by RNF114 during maternal-to-zygotic transition; leading to degradation. In terms of processing, O-GlcNAcylated at Ser-393 is required for full MAP3K7/TAK1 activation upon stimulation with IL-1 or osmotic stress.

Its subcellular location is the cytoplasm. The protein resides in the cytosol. It is found in the endoplasmic reticulum membrane. In terms of biological role, key adapter protein that plays an essential role in JNK and NF-kappa-B activation and proinflammatory cytokines production in response to stimulation with TLRs and cytokines. Mechanistically, associates with the catalytic domain of MAP3K7/TAK1 to trigger MAP3K7/TAK1 autophosphorylation leading to its full activation. Similarly, associates with MAPK14 and triggers its autophosphorylation and subsequent activation. In turn, MAPK14 phosphorylates TAB1 and inhibits MAP3K7/TAK1 activation in a feedback control mechanism. Also plays a role in recruiting MAPK14 to the TAK1 complex for the phosphorylation of the TAB2 and TAB3 regulatory subunits. The protein is TGF-beta-activated kinase 1 and MAP3K7-binding protein 1 (Tab1) of Mus musculus (Mouse).